Reading from the N-terminus, the 432-residue chain is Serine--tRNA ligase (432 aa).

239-241 (TSE) serves as a coordination point for L-serine. An ATP-binding site is contributed by 270–272 (RSE). Glutamate 293 is an L-serine binding site. 357 to 360 (EISS) contributes to the ATP binding site. Position 392 (serine 392) interacts with L-serine.

The protein belongs to the class-II aminoacyl-tRNA synthetase family. Type-1 seryl-tRNA synthetase subfamily. As to quaternary structure, homodimer. The tRNA molecule binds across the dimer.

Its subcellular location is the cytoplasm. It catalyses the reaction tRNA(Ser) + L-serine + ATP = L-seryl-tRNA(Ser) + AMP + diphosphate + H(+). It carries out the reaction tRNA(Sec) + L-serine + ATP = L-seryl-tRNA(Sec) + AMP + diphosphate + H(+). It functions in the pathway aminoacyl-tRNA biosynthesis; selenocysteinyl-tRNA(Sec) biosynthesis; L-seryl-tRNA(Sec) from L-serine and tRNA(Sec): step 1/1. In terms of biological role, catalyzes the attachment of serine to tRNA(Ser). Is also able to aminoacylate tRNA(Sec) with serine, to form the misacylated tRNA L-seryl-tRNA(Sec), which will be further converted into selenocysteinyl-tRNA(Sec). The sequence is that of Serine--tRNA ligase from Methylibium petroleiphilum (strain ATCC BAA-1232 / LMG 22953 / PM1).